An 89-amino-acid polypeptide reads, in one-letter code: Large ribosomal subunit protein bL27 (89 aa).

Residues 1-20 (MAHKKAGGSSRNGRDSESKR) are disordered.

Belongs to the bacterial ribosomal protein bL27 family.

This is Large ribosomal subunit protein bL27 from Bartonella bacilliformis (strain ATCC 35685 / KC583 / Herrer 020/F12,63).